The sequence spans 74 residues: Translation initiation factor IF-1 (74 aa).

The 72-residue stretch at 1 to 72 (MADTEKLKML…TRGRITYRHR (72 aa)) folds into the S1-like domain.

It belongs to the IF-1 family. Component of the 30S ribosomal translation pre-initiation complex which assembles on the 30S ribosome in the order IF-2 and IF-3, IF-1 and N-formylmethionyl-tRNA(fMet); mRNA recruitment can occur at any time during PIC assembly.

It localises to the cytoplasm. In terms of biological role, one of the essential components for the initiation of protein synthesis. Stabilizes the binding of IF-2 and IF-3 on the 30S subunit to which N-formylmethionyl-tRNA(fMet) subsequently binds. Helps modulate mRNA selection, yielding the 30S pre-initiation complex (PIC). Upon addition of the 50S ribosomal subunit IF-1, IF-2 and IF-3 are released leaving the mature 70S translation initiation complex. The protein is Translation initiation factor IF-1 of Ureaplasma parvum serovar 3 (strain ATCC 700970).